Here is a 119-residue protein sequence, read N- to C-terminus: Aspartate 1-decarboxylase (119 aa).

Serine 25 (schiff-base intermediate with substrate; via pyruvic acid) is an active-site residue. The residue at position 25 (serine 25) is a Pyruvic acid (Ser). Threonine 57 serves as a coordination point for substrate. The Proton donor role is filled by tyrosine 58. 73 to 75 (GAA) serves as a coordination point for substrate.

It belongs to the PanD family. In terms of assembly, heterooctamer of four alpha and four beta subunits. Pyruvate serves as cofactor. Post-translationally, is synthesized initially as an inactive proenzyme, which is activated by self-cleavage at a specific serine bond to produce a beta-subunit with a hydroxyl group at its C-terminus and an alpha-subunit with a pyruvoyl group at its N-terminus.

It is found in the cytoplasm. The enzyme catalyses L-aspartate + H(+) = beta-alanine + CO2. It participates in cofactor biosynthesis; (R)-pantothenate biosynthesis; beta-alanine from L-aspartate: step 1/1. Its function is as follows. Catalyzes the pyruvoyl-dependent decarboxylation of aspartate to produce beta-alanine. The protein is Aspartate 1-decarboxylase of Ruthia magnifica subsp. Calyptogena magnifica.